A 132-amino-acid polypeptide reads, in one-letter code: Small ribosomal subunit protein uS8 (132 aa).

The protein belongs to the universal ribosomal protein uS8 family. Part of the 30S ribosomal subunit. Contacts proteins S5 and S12.

Its function is as follows. One of the primary rRNA binding proteins, it binds directly to 16S rRNA central domain where it helps coordinate assembly of the platform of the 30S subunit. The chain is Small ribosomal subunit protein uS8 from Rhizobium rhizogenes (strain K84 / ATCC BAA-868) (Agrobacterium radiobacter).